The primary structure comprises 327 residues: Lipoyl synthase (327 aa).

The [4Fe-4S] cluster site is built by C66, C71, C77, C92, C96, C99, and S306. A Radical SAM core domain is found at 78–295 (FSKGTATFMI…EKEAYELGFS (218 aa)).

The protein belongs to the radical SAM superfamily. Lipoyl synthase family. Requires [4Fe-4S] cluster as cofactor.

It is found in the cytoplasm. The catalysed reaction is [[Fe-S] cluster scaffold protein carrying a second [4Fe-4S](2+) cluster] + N(6)-octanoyl-L-lysyl-[protein] + 2 oxidized [2Fe-2S]-[ferredoxin] + 2 S-adenosyl-L-methionine + 4 H(+) = [[Fe-S] cluster scaffold protein] + N(6)-[(R)-dihydrolipoyl]-L-lysyl-[protein] + 4 Fe(3+) + 2 hydrogen sulfide + 2 5'-deoxyadenosine + 2 L-methionine + 2 reduced [2Fe-2S]-[ferredoxin]. It functions in the pathway protein modification; protein lipoylation via endogenous pathway; protein N(6)-(lipoyl)lysine from octanoyl-[acyl-carrier-protein]: step 2/2. Functionally, catalyzes the radical-mediated insertion of two sulfur atoms into the C-6 and C-8 positions of the octanoyl moiety bound to the lipoyl domains of lipoate-dependent enzymes, thereby converting the octanoylated domains into lipoylated derivatives. The polypeptide is Lipoyl synthase (Neisseria meningitidis serogroup B (strain ATCC BAA-335 / MC58)).